Reading from the N-terminus, the 120-residue chain is Large ribosomal subunit protein eL34 (120 aa).

Belongs to the eukaryotic ribosomal protein eL34 family.

This is Large ribosomal subunit protein eL34 (RPL34) from Pisum sativum (Garden pea).